The chain runs to 466 residues: Asparagine--tRNA ligase (466 aa).

Belongs to the class-II aminoacyl-tRNA synthetase family. Homodimer.

Its subcellular location is the cytoplasm. It catalyses the reaction tRNA(Asn) + L-asparagine + ATP = L-asparaginyl-tRNA(Asn) + AMP + diphosphate + H(+). The chain is Asparagine--tRNA ligase from Sodalis glossinidius (strain morsitans).